The following is a 334-amino-acid chain: Holliday junction branch migration complex subunit RuvB (334 aa).

Residues 4–184 (ADRLISAAVI…FGIVQRLEFY (181 aa)) form a large ATPase domain (RuvB-L) region. Residues isoleucine 23, arginine 24, glycine 65, lysine 68, threonine 69, threonine 70, 131-133 (EDY), arginine 174, tyrosine 184, and arginine 221 contribute to the ATP site. Threonine 69 is a binding site for Mg(2+). The segment at 185 to 255 (QVADLEHIVS…VAMKALDMLN (71 aa)) is small ATPAse domain (RuvB-S). Residues 258–334 (AEGFDFMDRK…YKHFGITREE (77 aa)) form a head domain (RuvB-H) region. DNA is bound by residues arginine 294, arginine 313, and arginine 318.

This sequence belongs to the RuvB family. Homohexamer. Forms an RuvA(8)-RuvB(12)-Holliday junction (HJ) complex. HJ DNA is sandwiched between 2 RuvA tetramers; dsDNA enters through RuvA and exits via RuvB. An RuvB hexamer assembles on each DNA strand where it exits the tetramer. Each RuvB hexamer is contacted by two RuvA subunits (via domain III) on 2 adjacent RuvB subunits; this complex drives branch migration. In the full resolvosome a probable DNA-RuvA(4)-RuvB(12)-RuvC(2) complex forms which resolves the HJ.

It is found in the cytoplasm. The catalysed reaction is ATP + H2O = ADP + phosphate + H(+). In terms of biological role, the RuvA-RuvB-RuvC complex processes Holliday junction (HJ) DNA during genetic recombination and DNA repair, while the RuvA-RuvB complex plays an important role in the rescue of blocked DNA replication forks via replication fork reversal (RFR). RuvA specifically binds to HJ cruciform DNA, conferring on it an open structure. The RuvB hexamer acts as an ATP-dependent pump, pulling dsDNA into and through the RuvAB complex. RuvB forms 2 homohexamers on either side of HJ DNA bound by 1 or 2 RuvA tetramers; 4 subunits per hexamer contact DNA at a time. Coordinated motions by a converter formed by DNA-disengaged RuvB subunits stimulates ATP hydrolysis and nucleotide exchange. Immobilization of the converter enables RuvB to convert the ATP-contained energy into a lever motion, pulling 2 nucleotides of DNA out of the RuvA tetramer per ATP hydrolyzed, thus driving DNA branch migration. The RuvB motors rotate together with the DNA substrate, which together with the progressing nucleotide cycle form the mechanistic basis for DNA recombination by continuous HJ branch migration. Branch migration allows RuvC to scan DNA until it finds its consensus sequence, where it cleaves and resolves cruciform DNA. This Yersinia pseudotuberculosis serotype O:1b (strain IP 31758) protein is Holliday junction branch migration complex subunit RuvB.